The sequence spans 619 residues: Schlafen family member 12-like (619 aa).

A helical membrane pass occupies residues 598 to 618; it reads IFLFVCLFRFCLFVCLFVFFL.

Belongs to the Schlafen family.

It localises to the membrane. The sequence is that of Schlafen family member 12-like (SLFN12L) from Pongo abelii (Sumatran orangutan).